We begin with the raw amino-acid sequence, 299 residues long: Trans-aconitate 3-methyltransferase (299 aa).

S2 carries the post-translational modification N-acetylserine.

Belongs to the methyltransferase superfamily. Tam family.

The protein resides in the cytoplasm. The enzyme catalyses trans-aconitate + S-adenosyl-L-methionine = (E)-2-(methoxycarbonylmethyl)but-2-enedioate + S-adenosyl-L-homocysteine. In terms of biological role, catalyzes the S-adenosylmethionine monomethyl esterification of trans-aconitate and 3-isopropylmalate at high affinity and of other molecules like cis-aconitate, isocitrate, and citrate at lower velocities and affinities. The function of trans-aconitate methylation appears to be in reducing the toxicity of this spontaneous breakdown product of cis-aconitate. The role of 3-isopropylmalate methylation is unclear but may represent a metabolic branch at 3-isopropylmalate, where some of the material is taken in the pathway leading to leucine and some is taken in a pathway to the 3-isopropylmalate methyl ester, a molecule that provides a signal to switch from vegetative to invasive growth in response to amino acid starvation. The protein is Trans-aconitate 3-methyltransferase (TMT1) of Saccharomyces cerevisiae (strain YJM789) (Baker's yeast).